We begin with the raw amino-acid sequence, 266 residues long: Small ribosomal subunit protein uS2 (266 aa).

The interval 238–266 is disordered; the sequence is EFASAPDAGKKGRQAQPKKGKRASDAAAE. Positions 248–258 are enriched in basic residues; sequence KGRQAQPKKGK.

The protein belongs to the universal ribosomal protein uS2 family.

The chain is Small ribosomal subunit protein uS2 from Xylella fastidiosa (strain M12).